Reading from the N-terminus, the 243-residue chain is DNA repair protein RecO (243 aa).

Belongs to the RecO family.

Functionally, involved in DNA repair and RecF pathway recombination. The sequence is that of DNA repair protein RecO from Xylella fastidiosa (strain M23).